The primary structure comprises 504 residues: Lysine--tRNA ligase (504 aa).

Mg(2+) contacts are provided by E404 and E411.

The protein belongs to the class-II aminoacyl-tRNA synthetase family. As to quaternary structure, homodimer. Requires Mg(2+) as cofactor.

It localises to the cytoplasm. The enzyme catalyses tRNA(Lys) + L-lysine + ATP = L-lysyl-tRNA(Lys) + AMP + diphosphate. In Aliarcobacter butzleri (strain RM4018) (Arcobacter butzleri), this protein is Lysine--tRNA ligase.